The chain runs to 205 residues: Disintegrin-like leberagin-C (205 aa).

A Disintegrin domain is found at 4 to 90 (PPVCGNELLE…DCPIDRFHRN (87 aa)). 9 cysteine pairs are disulfide-bonded: Cys7-Cys26, Cys18-Cys36, Cys62-Cys82, Cys69-Cys94, Cys101-Cys106, Cys113-Cys128, Cys151-Cys158, Cys163-Cys171, and Cys193-Cys198. The D/ECD-tripeptide motif lies at 68-70 (ECD). Asn120 carries N-linked (GlcNAc...) asparagine glycosylation.

Belongs to the venom metalloproteinase (M12B) family. P-III subfamily. P-IIIb sub-subfamily. Monomer. As to expression, expressed by the venom gland.

Its subcellular location is the secreted. Its function is as follows. Inhibits platelet aggregation induced by thrombin and arachidonic acid with IC(50) of 40 and 50 nM respectively (in rabbit platetelet-rich plasma). It also inhibits the adhesion of melanoma tumor cells on fibrinogen and fibronectin, by interfering with the function of alpha-V/beta-3 (ITGAV/ITGB3) and, to a lesser extent, with alpha-V/beta-6 (ITGAV/ITGB6) and alpha-5/beta-1 (ITGA5/ITGB1) integrins. In Macrovipera lebetina transmediterranea (Blunt-nosed viper), this protein is Disintegrin-like leberagin-C.